We begin with the raw amino-acid sequence, 404 residues long: Propionate kinase (404 aa).

It belongs to the acetokinase family. PduW subfamily.

The protein resides in the cytoplasm. It carries out the reaction propanoate + ATP = propanoyl phosphate + ADP. It participates in polyol metabolism; 1,2-propanediol degradation. Functionally, works with phosphate acetyltransferase (pta) to capture exogenous propionate and regenerate propionyl-CoA during degradation of 1,2-propanediol (1,2-PD). The protein is Propionate kinase of Klebsiella pneumoniae (strain 342).